A 427-amino-acid polypeptide reads, in one-letter code: Serine--tRNA ligase (427 aa).

231–233 contributes to the L-serine binding site; it reads TAE. 262 to 264 contacts ATP; sequence RSE. Residue glutamate 285 coordinates L-serine. 349-352 contacts ATP; that stretch reads EISS. Serine 385 is an L-serine binding site.

It belongs to the class-II aminoacyl-tRNA synthetase family. Type-1 seryl-tRNA synthetase subfamily. In terms of assembly, homodimer. The tRNA molecule binds across the dimer.

It is found in the cytoplasm. It carries out the reaction tRNA(Ser) + L-serine + ATP = L-seryl-tRNA(Ser) + AMP + diphosphate + H(+). The enzyme catalyses tRNA(Sec) + L-serine + ATP = L-seryl-tRNA(Sec) + AMP + diphosphate + H(+). It participates in aminoacyl-tRNA biosynthesis; selenocysteinyl-tRNA(Sec) biosynthesis; L-seryl-tRNA(Sec) from L-serine and tRNA(Sec): step 1/1. In terms of biological role, catalyzes the attachment of serine to tRNA(Ser). Is also able to aminoacylate tRNA(Sec) with serine, to form the misacylated tRNA L-seryl-tRNA(Sec), which will be further converted into selenocysteinyl-tRNA(Sec). This Staphylococcus saprophyticus subsp. saprophyticus (strain ATCC 15305 / DSM 20229 / NCIMB 8711 / NCTC 7292 / S-41) protein is Serine--tRNA ligase.